The chain runs to 442 residues: Protein bag of marbles (442 aa).

The required for interaction with ubiquitin stretch occupies residues 201 to 250 (FDMPVKSTMPKSLNVRYQLQVLCTKVERFLVQQRRTLEANRHFDFEKYDE). Residues 408–442 (VSMEQPSASEEEFEETEEVPSSPPRHTGRVPRFRS) are disordered. Acidic residues predominate over residues 416 to 425 (SEEEFEETEE). Basic residues predominate over residues 433–442 (HTGRVPRFRS).

As to quaternary structure, interacts (via central region) with ubiquitin. Interacts (via C-terminus) with otu (via OTU domain); the interaction enhances otu aggregation into amyloid-like structures and enhances its deubiquitinase activity. Together with otu interacts with CycA/cyclin-A (via C-terminus); the interaction stabilizes CycA by promoting and enhancing otu dependent deubiquitination of CycA. Together with otu interacts with Traf6. Part of a complex composed of at least tut, bam and bgcn; complex formation does not require RNA. Interacts (via C-terminus) with bgcn; the interaction is direct and is not disrupted by eIF4A. Interacts with eIF4A (via multiple contacts); the interaction is direct and is not disrupted by bgcn. Interacts (via N-terminus) with tut; the interaction is direct and mediates the interaction between tut and bgcn. As part of the bam-bgcn-tut complex associates with twin; may recruit the CCR4-NOT1 deadenylation complex to mRNA 3'-UTRs to mediate post-transcriptional regulation of expression. Part of a complex composed of at least mei-P26, bam, bgcn and Sxl; this complex is involved in translational repression of nanos mRNA. In terms of processing, ubiquitinated (C-terminal region). In terms of tissue distribution, in cystoblasts and/or very early cystocytes in testis (at protein level); expression levels are regulated by mei-P26. In cystoblasts and/or very early cystocytes in ovary. Expressed in the gut; expression levels increase with age.

Its subcellular location is the cytoplasm. Regulatory component of a deubiquitinase complex consisting of bam and otu. The complex deubiquitinates K63-linked polyubiquitinated proteins, antagonizing the ubiquitination activity of Traf6 and regulating the IMD immune signaling pathway. Otu-bam deubiquitinase activity is regulated by Traf6 dependent immune signaling regulation of bam expression levels; this forms a feedback loop that regulates the IMD immune signaling pathway and balances gut immune activity during aging. The complex deubiquitinates and stabilizes CycA/cyclin-A to regulate CycA-dependent differentiation. Required to initiate both male and female gametogenesis. Part of a complex with bgcn involved in 3'-UTR-dependent translational repression of a subset of mRNAs, including those for mei-P26, nanos and shg/E-cadherin. Repression of mei-P26 is targeted by let-7 miRNA. Involved in a regulatory cascade with mei-P26 to control the progression of cystocytes through transit amplification and the switch to spermatocyte differentiation; mei-P26 facilitates bam accumulation, which in turn represses translation of mei-P26. Forms a complex with tut and bgcn involved in 3'-UTR-dependent post-transcriptional repression of several 3'-RNA processing factors, which promotes germline stem cell lineage differentiation and mitosis-to-meiosis transition. The sequence is that of Protein bag of marbles from Drosophila melanogaster (Fruit fly).